A 434-amino-acid chain; its full sequence is [Pyruvate dehydrogenase (acetyl-transferring)] kinase isozyme 1, mitochondrial (434 aa).

The transit peptide at 1–26 (MRLARLLRGGTSVRPLCAVPCASRSL) directs the protein to the mitochondrion. Tyr136 carries the post-translational modification Phosphotyrosine; by FGFR1. The Histidine kinase domain occupies 161-391 (TEYKESFGVD…DAVIYIKALS (231 aa)). Tyr241 bears the Phosphotyrosine; by FGFR1, ABL1, FLT3 and JAK2 mark. Tyr242 carries the post-translational modification Phosphotyrosine; by FGFR1. Residues 277 to 284 (ELFKNAMR), Asp316, 335 to 336 (ST), and 352 to 357 (GFGYGL) each bind ATP. A Phosphothreonine modification is found at Thr336. An N6-succinyllysine modification is found at Lys403.

It belongs to the PDK/BCKDK protein kinase family. In terms of assembly, homodimer, and heterodimer with PDK2. Interacts with the pyruvate dehydrogenase complex subunit DLAT, and is part of the multimeric pyruvate dehydrogenase complex that contains multiple copies of pyruvate dehydrogenase (E1), dihydrolipoamide acetyltransferase (DLAT, E2) and lipoamide dehydrogenase (DLD, E3). Interacts with phosphoglycerate kinase PGK1; the interaction is direct, occurs under hypoxic conditions and leads to PDK1-mediated inhibition of pyruvate dehydrogenase complex activity. In terms of processing, phosphorylated by constitutively activated ABL1, FGFR1, FLT3 and JAK2 (in vitro), and this may also occur in cancer cells that express constitutively activated ABL1, FGFR1, FLT3 and JAK2. Phosphorylation at Tyr-241 and Tyr-242 strongly increases kinase activity, while phosphorylation at Tyr-136 has a lesser effect. Phosphorylated under hypoxic conditions at Thr-336 by phosphoglycerate kinase PGK1 which has an activating effect.

The protein localises to the mitochondrion matrix. The catalysed reaction is L-seryl-[pyruvate dehydrogenase E1 alpha subunit] + ATP = O-phospho-L-seryl-[pyruvate dehydrogenase E1 alpha subunit] + ADP + H(+). In terms of biological role, kinase that plays a key role in regulation of glucose and fatty acid metabolism and homeostasis via phosphorylation of the pyruvate dehydrogenase subunits PDHA1 and PDHA2. This inhibits pyruvate dehydrogenase activity, and thereby regulates metabolite flux through the tricarboxylic acid cycle, down-regulates aerobic respiration and inhibits the formation of acetyl-coenzyme A from pyruvate. Plays an important role in cellular responses to hypoxia and is important for cell proliferation under hypoxia. In Mus musculus (Mouse), this protein is [Pyruvate dehydrogenase (acetyl-transferring)] kinase isozyme 1, mitochondrial (Pdk1).